The following is a 728-amino-acid chain: Magnetosome formation protease MamE (728 aa).

The Cytoplasmic portion of the chain corresponds to 1 to 21 (MAMFNGDVEDGGRGDASCGKD). The chain crosses the membrane as a helical span at residues 22–42 (LKRYLMLMGVVALVVLFGAFI). At 43–728 (YRQSSGGLRL…RNGQEFWIVL (686 aa)) the chain is on the lumenal side. Active-site charge relay system residues include His-188, Asp-221, and Ser-297. An MCR (magnetochrome) 1 motif is present at residues 375 to 398 (IFAGTRAPHTDGRQNMDCTTCHDL). Heme is bound by residues Cys-392, Cys-395, His-396, Cys-438, Cys-441, and His-442. Positions 421–444 (IPMGAVSPHTDGRQNMNCANCHQM) match the MCR 2 motif. PDZ domains are found at residues 471–573 (AINI…LRDG) and 622–721 (PAVM…NRNG).

The protein in the N-terminal section; belongs to the peptidase S1C family. In terms of assembly, might interact with MamB via PDZ1. The cofactor is heme. Post-translationally, subject to autocatalytic cleavage; cleavage also requires MamO.

The protein resides in the magnetosome membrane. With respect to regulation, autoproteolysis is stimulated by exogenous substrates or peptides that bind to its PDZ domains; may be stimulated by an environmental cue in vivo. Protease activity is tightly regulated; increasing its activity decreases substrate levels and disturbs biomineralization. Acts at 2 distinct steps of magnetosome formation; required for correct localization of proteins to the magnetosome while the protease activity is required for maturation of small magnetite crystals into larger, functional ones. The 2 functions are separable by mutation. Probably cleaves at least itself, MamO and MamP; cleavage requires the putative transport domain of MamO. Involved in localization of some proteins (at least MamA, MamC, MamF, MamI and MamJ) to the magnetosome. This chain is Magnetosome formation protease MamE (mamE), found in Paramagnetospirillum magneticum (strain ATCC 700264 / AMB-1) (Magnetospirillum magneticum).